We begin with the raw amino-acid sequence, 478 residues long: Spindle defective protein 3 (478 aa).

The Cytoplasmic portion of the chain corresponds to 1-24 (MDQMTVEEKILEHQELEDGSSSFR). A helical transmembrane segment spans residues 25–45 (WLVSSTVIAIGGATVALYISG). Residues 46–52 (KIDWKIP) lie on the Extracellular side of the membrane. A helical transmembrane segment spans residues 53-73 (AIEAGLALTAGGTITCGYLWF). Over 74 to 478 (KKRVKTVRKL…LRRVDDDIIE (405 aa)) the chain is Cytoplasmic.

The protein resides in the mitochondrion. It localises to the mitochondrion outer membrane. Functionally, in the first mitotic division in embryos, required for mitotic spindle alignment and asymmetric cell division. Required for motor-driven chromosome movement and homolog searching within the nucleus, and subsequently ensures homologous chromosome pairing during the prophase stage of meiosis. This Caenorhabditis elegans protein is Spindle defective protein 3.